Reading from the N-terminus, the 188-residue chain is Putative pre-16S rRNA nuclease (188 aa).

Positions 156 to 188 (LRQGDAAPGGSDDERDEDGDTDGEDGGGDGGGE) are disordered. Acidic residues predominate over residues 166-188 (SDDERDEDGDTDGEDGGGDGGGE).

This sequence belongs to the YqgF nuclease family.

The protein resides in the cytoplasm. In terms of biological role, could be a nuclease involved in processing of the 5'-end of pre-16S rRNA. In Rhodospirillum centenum (strain ATCC 51521 / SW), this protein is Putative pre-16S rRNA nuclease.